We begin with the raw amino-acid sequence, 1755 residues long: MQLRYFKSILPPADQYQKITSLTWAPNNSRLAAVSTDKVVYLFDENGEKRDKFKTKAAEANNPNTYIIRAMAFSPDSTKLAIAQSDNIVFIYRLVDPDTGAEKKSICNKFPQACAVTSLVWPKDRPNEVVFGLADGKVRLGMLKNNKSYTCYAHPENSYVVALASSLNGQNVISGHMDGAIWKFNFPAEEGGTPTSSQLVVHSCVPYSLGWGSCIAAAGNDNRVVFYDLNGREIRSFDYSNNDEVREFTTCAFNPSGDTVVFGTYNRFYMYTFNIQRNDWEEAGHKQIDNFYAVSAASWKPDGSKMTVGSMTGAVDMYDACVKRHMYKGKFEFTYVSKSAVIVKTLKTGMRIVLKSVYGYEIEKINIYHDRYLIARTTYTLLMGDLDTCKLSEIPWDSDGSEKFHFENERVCMVHYAGELHIVEYGRNDVLGTCRTEHMNPYLISAVVQEARGIASESKKLAYLIDLQTVRIQDLMAPVGSTLATVNHDTKVDWLELNQRGTHLLFRDKKRHLHLFSLSGQERTTLLNYCQYVQWVPGSDVIVAQSRNNLCVWYSVNKPDNVTMFPIKGEVVDIERHNHRTEVIVDEGINTVSYALDEALIYFGAALEDQDYERAVQTLEPLELTPETEAQWMQLAEQALATNQLVIAERCYAALGDIAKSRFLHKVVKKAQQAAKEFGGDGTDAWSVRAMMAQLNKQWPVSESLLLAQGKVDDAITLYQDNHRWEDAIRVADSTHHANAAALKQQYLTWLLETGQEEQAGAVKEREGDYLAAIGLYLKGGLPGRAAQVVMSVHNVNWDPALLDSILASLAKAGLYERAGELYEHMSRSSEAMQSYRRGHAYRKAIDLARREFPAEVIIIEEEWGDWLVTQKQMDAAINHFIESGATLKAIKAAIDCRQFAKAAGIIEVLDPREAMPYFRRIAQHYETTGALEEAERYYIRADMARDAVEMYSRAGKWEAAQRVARGYLTESEMRAFYRAKAAEFEAAHKLKEAEKAYLAAGGDDVDKAIAMYKRNKMYDQMIRLVTQYRKEKVPEAHTLIAQQLEVEGNLREAEKHFVEAKDWKSAVQMYRQVNQWEDALRVAKVYGGVNASKQVAYAWALTLGGDDGAQLLKKMGLLDHAIEYAVESGAFAQAFEMTRAGAKHKLPEVHLKYAMFLEDEGRFAEAEAEFISAGKPKEACDMYMHNQDWDAAMRIAERYDPTMVSEILVSQARVAVERKQWLPAEGLFIKAKRPEAALKMYRDARMWNDALRVAEQYLPTKVAEVQMELLSGQGAGGGSGGASADAVINKARGFERNNDYARAIETYLSLTAQDTSNQDQLEHCWGQAAQLAINYQRHRMKDVVNTVSERLQEIGRHQAAGELHESIDDAQGAIRAYCAGRLWDKARTLAGTNPTFSRYIEDQYNNYLLQNQQADELASRGGQHAQQAIEMYVARDEWAKVHELAAQQGPEVASNYALKHAERRFKQGDYAQAAQVFAQHGITAQPQYFELYKSIAQGVLHASQGDRNPVAEKSLRDMMYRLVNVLRSGGGAGKYKVDTDAFQNYYLAAHYLTCAAAAKEQGLKDIAAMNLTSVLRYVGPTIPADRAFYEAGLAWYEAGRKNMAFVMLNRFLDLSDAMDEPDSSAAVIENADFSDTDIPYDFTIPERAYCTESQREDVRNLVLEISMDRSSDQSLALKACEHCGKPTYEANLTCHFCKKKYDPCVVTGYPIQSYDRVVFKNNGPELNAIRDMWNKWVEAFGTDPVTGMQAAPMY.

WD repeat units lie at residues 14 to 53, 63 to 102, 111 to 153, 155 to 194, 198 to 238, 289 to 328, 487 to 525, and 526 to 563; these read DQYQKITSLTWAPNNSRLAAVSTDKVVYLFDENGEKRDKF, PNTYIIRAMAFSPDSTKLAIAQSDNIVFIYRLVDPDTGAE, PQAC…TCYA, PENSYVVALASSLNGQNVISGHMDGAIWKFNFPAEEGGTP, QLVV…RSFD, DNFYAVSAASWKPDGSKMTVGSMTGAVDMYDACVKRHMYK, NHDTKVDWLELNQRGTHLLFRDKKRHLHLFSLSGQERTT, and LLNYCQYVQWVPGSDVIVAQSRNNLCVWYSVNKPDNVT. TPR repeat units follow at residues 597–628, 696–729, 754–788, 813–846, 858–892, 916–949, 988–1023, 1048–1081, 1219–1252, 1285–1318, 1355–1388, 1455–1489, and 1586–1619; these read DEALIYFGAALEDQDYERAVQTLEPLELTPET, NKQWPVSESLLLAQGKVDDAITLYQDNHRWEDAI, TGQEEQAGAVKEREGDYLAAIGLYLKGGLPGRAAQ, AGLYERAGELYEHMSRSSEAMQSYRRGHAYRKAI, IIIEEEWGDWLVTQKQMDAAINHFIESGATLKAIK, MPYFRRIAQHYETTGALEEAERYYIRADMARDAV, AHKLKEAEKAYLAAGGDDVDKAIAMYKRNKMYDQMI, EGNLREAEKHFVEAKDWKSAVQMYRQVNQWEDAL, RKQWLPAEGLFIKAKRPEAALKMYRDARMWNDAL, ADAVINKARGFERNNDYARAIETYLSLTAQDTSN, IGRHQAAGELHESIDDAQGAIRAYCAGRLWDKAR, SNYALKHAERRFKQGDYAQAAQVFAQHGITAQPQY, and DRAFYEAGLAWYEAGRKNMAFVMLNRFLDLSDAM.

Belongs to the IFT172 family. Component of the IFT complex B, the core composed of IFT25, IFT27, IFT46, IFT52, IFT74, IFT81 and IFT88 as well as associated subunits IFT20, IFT57, IFT80 and IFT172. Interacts with microtubule end-binding protein 1 (MAPRE1/EB1).

It localises to the cytoplasm. It is found in the cytoskeleton. The protein resides in the cilium basal body. Required for the maintenance and formation of cilia and participates in the control of flagellar assembly/disassembly at the tip. Involved in regulating the transition between anterograde and retrograde intraflagellar transport at the tip. This is Intraflagellar transport protein 172 (IFT172) from Chlamydomonas reinhardtii (Chlamydomonas smithii).